Here is a 1116-residue protein sequence, read N- to C-terminus: MTDVSATTGRAGDRVSSTSSEVAVETTSQALTNGAAKEPLAAVTAEATATATVTATTTATVTATTTAATATMATAVISKQAKSECHSQSNNNQHVETAPSKQSSDSEASAPTTVSIPSANAKINSSSSGKTTATQQDVDEVARLFEEKPEAFEKWLTERAPPEALSRLHEFIESRKPHKRPSVTSDLFQQWMASPTVQQKSPRKLSNSSVHALPESRRHLMELDEGELFMELIRDVANELDIDVLCHKILVNVGLLTHADRGSLFLAKGTPNNRYLVAKLFDVTQTTALKDAVTRARAEEIIIPFGIGIAGMVAQTKQMINIKEAYKDARFNCEIDLKTGYTTNAILCMPICNYEGDIIGVAQIINKTNGCMEFDEHDVEIFRRYLTFCGIGIQNAQLFEMSVQEYRRNQILLNLARSIFEEQNNLECLVTKIMTEARELLKCERCSVFLVDLDCCEESHLEKIIEKPHQLQQQRTPRAIMSGDSFEEKQNMRNRFTVLFELGGENHAANVSRPSINDLSHSTLAQIAQFVATTGQTVNICDVQDWVREHNQIRAESEIDSTQAILCMPIVNAQKTVIGVAQLINKASGLPFTESDASIFEAFAIFCGLGIHNTQMYENACKLMAKQKVALECLSYHATASQDQTEKLAQDVIAEAEAYNLYSFTFTDFDLVDDDTCRAVLRMFMQCNLVSQFHIPYDVLCRWVLSVRKNYRPVKYHNWRHALNVAQTMFAMLKTGKMERFMTDLEILGLLVACLCHDLDHRGTNNAFQTKTESPLAILYTTSTMEHHHFDQCVMILNSEGNNIFQALSPEDYRSVMKTVESAILSTDLAMYFKKRNAFLELVENGEFDWQGEEKKDLLCGMMMTACDVSAIAKPWEVQHRVAKLVADEFFDQGDLEKLQLNTQPVAMMDRERKDELPKMQVGFIDVICLPLYRVLCDTFPWITPLYEGTLENRRNWQDLAEKVEMGLTWIDHDTIDKPVEEFAGCADEEIKDIEFTVTTLNCNQHGGSAGGGEDTHTPEHQRSSSRLSIKKTGALGKVVRSKLSKTLYNSMDGSKPKTSLKLLESHVSEDMDDKSPTSPSQPHSGSVGRMSASSSTSSAGTVDKSKKRSKLCALL.

Disordered regions lie at residues 1 to 36 and 82 to 136; these read MTDVSATTGRAGDRVSSTSSEVAVETTSQALTNGAA and KSEC…ATQQ. The segment covering 15–28 has biased composition (low complexity); the sequence is VSSTSSEVAVETTS. Over residues 86–136 the composition is skewed to polar residues; it reads HSQSNNNQHVETAPSKQSSDSEASAPTTVSIPSANAKINSSSSGKTTATQQ. GAF domains follow at residues 241 to 393 and 425 to 611; these read DIDV…GIGI and NLEC…GLGI. Residues 641-964 form the PDEase domain; it reads SQDQTEKLAQ…RNWQDLAEKV (324 aa). Residue His-717 is the Proton donor of the active site. The a divalent metal cation site is built by His-721, His-757, Asp-758, and Asp-868. 2 disordered regions span residues 1005–1031 and 1067–1116; these read QHGGSAGGGEDTHTPEHQRSSSRLSIK and HVSE…CALL. Composition is skewed to basic and acidic residues over residues 1014–1023 and 1067–1076; these read EDTHTPEHQR and HVSEDMDDKS. The span at 1085-1103 shows a compositional bias: low complexity; sequence SGSVGRMSASSSTSSAGTV. Basic residues predominate over residues 1106-1116; that stretch reads SKKRSKLCALL. Position 1113 is a cysteine methyl ester (Cys-1113). Cys-1113 carries the S-farnesyl cysteine lipid modification. The propeptide at 1114–1116 is removed in mature form; that stretch reads ALL.

It belongs to the cyclic nucleotide phosphodiesterase family. As to quaternary structure, interacts with PrBP. A divalent metal cation is required as a cofactor.

It localises to the cell membrane. It catalyses the reaction 3',5'-cyclic GMP + H2O = GMP + H(+). Functionally, has a role regulating cGMP transport in Malpighian tubule principal cells. The sequence is that of cGMP-specific 3',5'-cyclic phosphodiesterase from Drosophila mojavensis (Fruit fly).